The sequence spans 323 residues: Pantothenate kinase (323 aa).

Positions 1-12 (MAEQNAASTTGV) are enriched in polar residues. Positions 1-24 (MAEQNAASTTGVKPSPRTPDFSPY) are disordered. An ATP-binding site is contributed by 108-115 (GSVAVGKS).

It belongs to the prokaryotic pantothenate kinase family.

Its subcellular location is the cytoplasm. The catalysed reaction is (R)-pantothenate + ATP = (R)-4'-phosphopantothenate + ADP + H(+). It participates in cofactor biosynthesis; coenzyme A biosynthesis; CoA from (R)-pantothenate: step 1/5. The polypeptide is Pantothenate kinase (Corynebacterium glutamicum (strain R)).